Reading from the N-terminus, the 230-residue chain is Ribonuclease HII (230 aa).

The RNase H type-2 domain occupies 1–224 (MIIIGIDEAG…CKRILDKSKQ (224 aa)). Aspartate 7, glutamate 8, and aspartate 112 together coordinate a divalent metal cation.

It belongs to the RNase HII family. It depends on Mn(2+) as a cofactor. Requires Mg(2+) as cofactor.

The protein localises to the cytoplasm. The enzyme catalyses Endonucleolytic cleavage to 5'-phosphomonoester.. Functionally, endonuclease that specifically degrades the RNA of RNA-DNA hybrids. The protein is Ribonuclease HII (rnhB) of Methanocaldococcus jannaschii (strain ATCC 43067 / DSM 2661 / JAL-1 / JCM 10045 / NBRC 100440) (Methanococcus jannaschii).